We begin with the raw amino-acid sequence, 89 residues long: Small ribosomal subunit protein uS15 (89 aa).

This sequence belongs to the universal ribosomal protein uS15 family. In terms of assembly, part of the 30S ribosomal subunit. Forms a bridge to the 50S subunit in the 70S ribosome, contacting the 23S rRNA.

Its function is as follows. One of the primary rRNA binding proteins, it binds directly to 16S rRNA where it helps nucleate assembly of the platform of the 30S subunit by binding and bridging several RNA helices of the 16S rRNA. In terms of biological role, forms an intersubunit bridge (bridge B4) with the 23S rRNA of the 50S subunit in the ribosome. The chain is Small ribosomal subunit protein uS15 from Acidothermus cellulolyticus (strain ATCC 43068 / DSM 8971 / 11B).